Consider the following 60-residue polypeptide: Large ribosomal subunit protein bL32 (60 aa).

The protein belongs to the bacterial ribosomal protein bL32 family.

In Clostridium acetobutylicum (strain ATCC 824 / DSM 792 / JCM 1419 / IAM 19013 / LMG 5710 / NBRC 13948 / NRRL B-527 / VKM B-1787 / 2291 / W), this protein is Large ribosomal subunit protein bL32.